Here is a 555-residue protein sequence, read N- to C-terminus: Carboxylesterase patB (555 aa).

Positions 1-16 (MLFTASLLLLLPWASA) are cleaved as a signal peptide. Asn-37 and Asn-75 each carry an N-linked (GlcNAc...) asparagine glycan. Ser-258 (acyl-ester intermediate) is an active-site residue. Ser-258 provides a ligand contact to substrate. N-linked (GlcNAc...) asparagine glycosylation is present at Asn-311. The active-site Charge relay system is the Glu-380. Residues Asn-388 and Asn-491 are each glycosylated (N-linked (GlcNAc...) asparagine).

Belongs to the type-B carboxylesterase/lipase family.

It localises to the cytoplasm. It is found in the cytosol. The catalysed reaction is a carboxylic ester + H2O = an alcohol + a carboxylate + H(+). It participates in mycotoxin biosynthesis; patulin biosynthesis. In terms of biological role, carboxylesterase; part of the gene cluster that mediates the biosynthesis of patulin, an acetate-derived tetraketide mycotoxin produced by several fungal species that shows antimicrobial properties against several bacteria. The function of patB in patulin synthesis has still to be characterized. The pathway begins with the synthesis of 6-methylsalicylic acid by the polyketide synthase (PKS) patK via condensation of acetate and malonate units. The 6-methylsalicylic acid decarboxylase patG then catalyzes the decarboxylation of 6-methylsalicylic acid to yield m-cresol (also known as 3-methylphenol). These first reactions occur in the cytosol. The intermediate m-cresol is then transported into the endoplasmic reticulum where the cytochrome P450 monooxygenase patH converts it to m-hydroxybenzyl alcohol, which is further converted to gentisyl alcohol by the cytochrome P450 monooxygenase patI. The oxidoreductases patJ and patO further convert gentisyl alcohol to isoepoxydon in the vacuole. PatN catalyzes then the transformation of isoepoxydon into phyllostine. The cluster protein patF is responsible for the conversion from phyllostine to neopatulin whereas the alcohol dehydrogenase patD converts neopatulin to E-ascladiol. The steps between isoepoxydon and E-ascladiol occur in the cytosol, and E-ascladiol is probably secreted to the extracellular space by one of the cluster-specific transporters patC or patM. Finally, the secreted patulin synthase patE catalyzes the conversion of E-ascladiol to patulin. This Aspergillus clavatus (strain ATCC 1007 / CBS 513.65 / DSM 816 / NCTC 3887 / NRRL 1 / QM 1276 / 107) protein is Carboxylesterase patB.